A 165-amino-acid polypeptide reads, in one-letter code: NADH-quinone oxidoreductase subunit I (165 aa).

2 consecutive 4Fe-4S ferredoxin-type domains span residues arginine 57 to glutamate 86 and serine 96 to isoleucine 125. The [4Fe-4S] cluster site is built by cysteine 66, cysteine 69, cysteine 72, cysteine 76, cysteine 105, cysteine 108, cysteine 111, and cysteine 115.

Belongs to the complex I 23 kDa subunit family. As to quaternary structure, NDH-1 is composed of 14 different subunits. Subunits NuoA, H, J, K, L, M, N constitute the membrane sector of the complex. [4Fe-4S] cluster is required as a cofactor.

The protein resides in the cell inner membrane. The catalysed reaction is a quinone + NADH + 5 H(+)(in) = a quinol + NAD(+) + 4 H(+)(out). NDH-1 shuttles electrons from NADH, via FMN and iron-sulfur (Fe-S) centers, to quinones in the respiratory chain. The immediate electron acceptor for the enzyme in this species is believed to be ubiquinone. Couples the redox reaction to proton translocation (for every two electrons transferred, four hydrogen ions are translocated across the cytoplasmic membrane), and thus conserves the redox energy in a proton gradient. The protein is NADH-quinone oxidoreductase subunit I of Polaromonas sp. (strain JS666 / ATCC BAA-500).